Reading from the N-terminus, the 78-residue chain is Translational regulator CsrA (78 aa).

It belongs to the CsrA/RsmA family. Homodimer; the beta-strands of each monomer intercalate to form a hydrophobic core, while the alpha-helices form wings that extend away from the core.

The protein resides in the cytoplasm. Its function is as follows. A translational regulator that binds mRNA to regulate translation initiation and/or mRNA stability. Usually binds in the 5'-UTR at or near the Shine-Dalgarno sequence preventing ribosome-binding, thus repressing translation. Its main target seems to be the major flagellin gene, while its function is anatagonized by FliW. The sequence is that of Translational regulator CsrA from Natranaerobius thermophilus (strain ATCC BAA-1301 / DSM 18059 / JW/NM-WN-LF).